The sequence spans 319 residues: Putative peptide biosynthesis protein YydG (319 aa).

Residues 1–214 form the Radical SAM core domain; the sequence is MYNKTVSINL…HCPGYDIVYH (214 aa). [4Fe-4S] cluster is bound by residues Cys-14, Cys-18, and Cys-21.

Requires [4Fe-4S] cluster as cofactor.

In terms of biological role, required for production of the modified peptide YydF. May activate a metalloenzyme (Potential). This is Putative peptide biosynthesis protein YydG (yydG) from Bacillus subtilis (strain 168).